Reading from the N-terminus, the 496-residue chain is Glutamyl-tRNA(Gln) amidotransferase subunit A (496 aa).

Active-site charge relay system residues include Lys-75 and Ser-150. Catalysis depends on Ser-174, which acts as the Acyl-ester intermediate.

This sequence belongs to the amidase family. GatA subfamily. As to quaternary structure, heterotrimer of A, B and C subunits.

The enzyme catalyses L-glutamyl-tRNA(Gln) + L-glutamine + ATP + H2O = L-glutaminyl-tRNA(Gln) + L-glutamate + ADP + phosphate + H(+). Its function is as follows. Allows the formation of correctly charged Gln-tRNA(Gln) through the transamidation of misacylated Glu-tRNA(Gln) in organisms which lack glutaminyl-tRNA synthetase. The reaction takes place in the presence of glutamine and ATP through an activated gamma-phospho-Glu-tRNA(Gln). The polypeptide is Glutamyl-tRNA(Gln) amidotransferase subunit A (Burkholderia ambifaria (strain MC40-6)).